A 142-amino-acid chain; its full sequence is Prefoldin subunit alpha (142 aa).

Belongs to the prefoldin subunit alpha family. In terms of assembly, heterohexamer of two alpha and four beta subunits.

It localises to the cytoplasm. Functionally, molecular chaperone capable of stabilizing a range of proteins. Seems to fulfill an ATP-independent, HSP70-like function in archaeal de novo protein folding. This is Prefoldin subunit alpha from Methanosarcina acetivorans (strain ATCC 35395 / DSM 2834 / JCM 12185 / C2A).